An 845-amino-acid polypeptide reads, in one-letter code: Beta-glucosidase B (845 aa).

Residue asparagine 202 is glycosylated (N-linked (GlcNAc...) asparagine). Aspartate 230 is a catalytic residue. An N-linked (GlcNAc...) asparagine glycan is attached at asparagine 235. Positions 406–557 (EGQPGWTLDF…HNRDLLSEAV (152 aa)) constitute a PA14 domain. Asparagine 591, asparagine 612, and asparagine 794 each carry an N-linked (GlcNAc...) asparagine glycan.

It belongs to the glycosyl hydrolase 3 family.

It carries out the reaction Hydrolysis of terminal, non-reducing beta-D-glucosyl residues with release of beta-D-glucose.. The protein operates within glycan metabolism; cellulose degradation. Its function is as follows. Beta-glucosidases are one of a number of cellulolytic enzymes involved in the degradation of cellulosic biomass. Catalyzes the last step releasing glucose from the inhibitory cellobiose. The sequence is that of Beta-glucosidase B (bglB) from Emericella nidulans (strain FGSC A4 / ATCC 38163 / CBS 112.46 / NRRL 194 / M139) (Aspergillus nidulans).